The chain runs to 1350 residues: Spike glycoprotein (1350 aa).

The first 12 residues, 1-12 (MTRLMCLLMSLS), serve as a signal peptide directing secretion. Topologically, residues 13-1295 (IFVRGFDSQF…GNYTYYNKWP (1283 aa)) are extracellular. The 336-residue stretch at 21–356 (QFVDMSPASN…DDLSQLHCSY (336 aa)) folds into the BetaCoV S1-NTD domain. N-linked (GlcNAc...) asparagine; by host glycans are attached at residues Asn-30, Asn-71, Asn-111, Asn-132, Asn-162, Asn-172, Asn-227, and Asn-241. 2 disulfides stabilise this stretch: Cys-191/Cys-242 and Cys-344/Cys-354. An N-linked (GlcNAc...) asparagine; by host glycan is attached at Asn-384. Positions 386–592 (TECDFSPMLT…GTGTDSVCPM (207 aa)) constitute a BetaCoV S1-CTD domain. Cysteines 388 and 412 form a disulfide. N-linked (GlcNAc...) asparagine; by host glycosylation is present at Asn-415. 2 disulfides stabilise this stretch: Cys-430–Cys-483 and Cys-442–Cys-590. Residues Asn-492, Asn-624, Asn-723, Asn-762, Asn-773, Asn-784, and Asn-869 are each glycosylated (N-linked (GlcNAc...) asparagine; by host). 2 fusion peptide regions span residues 885–906 (SAIEDLLFDKVTIADPGYMQGY) and 904–926 (QGYDDCMKQGPQSARDLICAQYV). Cys-909 and Cys-922 are joined by a disulfide. Positions 991–1041 (QKLIANKFNQALGAMQTGFTTSNLAFSKVQDAVNANAQALSKLASELSNTF) are heptad repeat 1. The stretch at 1020–1064 (QDAVNANAQALSKLASELSNTFGAISSSISDILARLDTVEQDAQI) forms a coiled coil. N-linked (GlcNAc...) asparagine; by host glycans are attached at residues Asn-1142, Asn-1145, Asn-1172, Asn-1224, Asn-1240, Asn-1255, Asn-1276, and Asn-1287. The segment at 1245–1284 (GPNFAEISKINTTLLDLSDEMAILQEVVKQLNDSYIDLKE) is heptad repeat 2. The stretch at 1257-1285 (TLLDLSDEMAILQEVVKQLNDSYIDLKEL) forms a coiled coil. The chain crosses the membrane as a helical span at residues 1296–1316 (WYIWLGFIAGLVALLLCVFFL). The Cytoplasmic segment spans residues 1317-1350 (LCCTGCGTSCLGKMKCKNCCDSYEEYDVEKIHVH). Residues 1348-1350 (HVH) carry the KxHxx motif.

This sequence belongs to the betacoronaviruses spike protein family. In terms of assembly, homotrimer; each monomer consists of a S1 and a S2 subunit. The resulting peplomers protrude from the virus surface as spikes. Specific enzymatic cleavages in vivo yield mature proteins. In terms of processing, specific enzymatic cleavages in vivo yield mature proteins. The precursor is processed into S1 and S2 by host cell furin or another cellular protease to yield the mature S1 and S2 proteins. Additionally, a second cleavage leads to the release of a fusion peptide after viral attachment to host cell receptor. Post-translationally, the cytoplasmic Cys-rich domain is palmitoylated. Spike glycoprotein is digested within host endosomes.

The protein localises to the virion membrane. It localises to the host endoplasmic reticulum-Golgi intermediate compartment membrane. It is found in the host cell membrane. Its function is as follows. Attaches the virion to the cell membrane by interacting with host receptor, initiating the infection. In terms of biological role, mediates fusion of the virion and cellular membranes by acting as a class I viral fusion protein. Under the current model, the protein has at least three conformational states: pre-fusion native state, pre-hairpin intermediate state, and post-fusion hairpin state. During viral and target cell membrane fusion, the coiled coil regions (heptad repeats) assume a trimer-of-hairpins structure, positioning the fusion peptide in close proximity to the C-terminal region of the ectodomain. The formation of this structure appears to drive apposition and subsequent fusion of viral and target cell membranes. Acts as a viral fusion peptide which is unmasked following S2 cleavage occurring upon virus endocytosis. This is Spike glycoprotein from Tylonycteris pachypus (Lesser bamboo bat).